The sequence spans 448 residues: MSRLFGTDGVRGIANTELTAELAYNLGRAGAYVLTEGTHKPKILVAKDTRISGDMLEAALVAGILSVGAEAVCLGVVPTPAVAHLTRVYGADAGVMISASHNPVEYNGIKFFDDKGYKLSDDLEDEIQRVIESGFENVPSPTGANLGREIIEKAALEDYISFAKDTIGISLEGLRVALDCANGASHEAAVRAFRELGAEIFVINDNPDGTNINENCGSTHPEELMEYVVKKKCHMGFAFDGDADRCLAVDEQGNLVDGDFILTICAKYLKELGRLKDDTLVVTVMSNLGLMIACKNEKINTAVTKVGDRYVLEEMLAKGYSLGGEQSGHIIFLDHNSTGDGLVTALQVASIVKRTGKSLFELKNVMKVLPQVLVNAKVPNNMKNIHEEDEEIIAEIKKMEAALDGCGRVLIRPSGTEPLVRVMLEGENQAEIDEMAHNLAKMIEAKCN.

The active-site Phosphoserine intermediate is the S100. Mg(2+)-binding residues include S100, D240, D242, and D244. Position 100 is a phosphoserine (S100).

This sequence belongs to the phosphohexose mutase family. It depends on Mg(2+) as a cofactor. In terms of processing, activated by phosphorylation.

It carries out the reaction alpha-D-glucosamine 1-phosphate = D-glucosamine 6-phosphate. Its function is as follows. Catalyzes the conversion of glucosamine-6-phosphate to glucosamine-1-phosphate. This is Phosphoglucosamine mutase from Clostridium perfringens (strain ATCC 13124 / DSM 756 / JCM 1290 / NCIMB 6125 / NCTC 8237 / Type A).